Reading from the N-terminus, the 253-residue chain is 3-deoxy-manno-octulosonate cytidylyltransferase (253 aa).

Belongs to the KdsB family.

The protein resides in the cytoplasm. It carries out the reaction 3-deoxy-alpha-D-manno-oct-2-ulosonate + CTP = CMP-3-deoxy-beta-D-manno-octulosonate + diphosphate. It participates in nucleotide-sugar biosynthesis; CMP-3-deoxy-D-manno-octulosonate biosynthesis; CMP-3-deoxy-D-manno-octulosonate from 3-deoxy-D-manno-octulosonate and CTP: step 1/1. The protein operates within bacterial outer membrane biogenesis; lipopolysaccharide biosynthesis. Its function is as follows. Activates KDO (a required 8-carbon sugar) for incorporation into bacterial lipopolysaccharide in Gram-negative bacteria. This is 3-deoxy-manno-octulosonate cytidylyltransferase from Geotalea daltonii (strain DSM 22248 / JCM 15807 / FRC-32) (Geobacter daltonii).